The sequence spans 341 residues: Phenylalanine--tRNA ligase alpha subunit (341 aa).

E253 is a binding site for Mg(2+).

Belongs to the class-II aminoacyl-tRNA synthetase family. Phe-tRNA synthetase alpha subunit type 1 subfamily. Tetramer of two alpha and two beta subunits. Requires Mg(2+) as cofactor.

The protein resides in the cytoplasm. It catalyses the reaction tRNA(Phe) + L-phenylalanine + ATP = L-phenylalanyl-tRNA(Phe) + AMP + diphosphate + H(+). This chain is Phenylalanine--tRNA ligase alpha subunit, found in Methylococcus capsulatus (strain ATCC 33009 / NCIMB 11132 / Bath).